A 198-amino-acid polypeptide reads, in one-letter code: NAD(P)H dehydrogenase (quinone) (198 aa).

The region spanning 4 to 189 (VLVLYYSMYG…SIARYQGEYV (186 aa)) is the Flavodoxin-like domain. FMN is bound by residues 10–15 (SMYGHI) and 78–80 (TRF). Tyrosine 12 is an NAD(+) binding site. Tryptophan 98 lines the substrate pocket. FMN-binding positions include 113–118 (STGTGG) and histidine 133.

This sequence belongs to the WrbA family. The cofactor is FMN.

It carries out the reaction a quinone + NADH + H(+) = a quinol + NAD(+). The enzyme catalyses a quinone + NADPH + H(+) = a quinol + NADP(+). The chain is NAD(P)H dehydrogenase (quinone) from Shigella dysenteriae serotype 1 (strain Sd197).